The following is a 149-amino-acid chain: Calmodulin (149 aa).

An N-acetylalanine modification is found at A2. EF-hand domains lie at 8-43, 44-79, 81-116, and 117-149; these read EQIA…LGQN, PTEA…KMKD, DSEE…LGEK, and LTDE…MMAK. Ca(2+) is bound by residues D21, D23, D25, T27, E32, D57, D59, N61, T63, E68, D94, D96, N98, and E105. The residue at position 116 (K116) is an N6,N6,N6-trimethyllysine. Ca(2+)-binding residues include D130, D132, D134, Q136, and E141.

The protein belongs to the calmodulin family.

In terms of biological role, calmodulin mediates the control of a large number of enzymes, ion channels and other proteins by Ca(2+). Among the enzymes to be stimulated by the calmodulin-Ca(2+) complex are a number of protein kinases and phosphatases. The protein is Calmodulin of Macrocystis pyrifera (Giant kelp).